Reading from the N-terminus, the 348-residue chain is Holliday junction branch migration complex subunit RuvB (348 aa).

Residues 3–183 are large ATPase domain (RuvB-L); it reads DDGLVSAAAS…FGFTAHLDFY (181 aa). ATP is bound by residues Leu-22, Arg-23, Gly-64, Lys-67, Thr-68, Ser-69, 130-132, Arg-173, Tyr-183, and Arg-220; that span reads EDF. Thr-68 lines the Mg(2+) pocket. A small ATPAse domain (RuvB-S) region spans residues 184 to 254; it reads DADELARVLT…IAQAALRIYD (71 aa). The tract at residues 257 to 348 is head domain (RuvB-H); it reads GLGLDRLDRA…TQVSLFTEGE (92 aa). Positions 312 and 317 each coordinate DNA.

Belongs to the RuvB family. As to quaternary structure, homohexamer. Forms an RuvA(8)-RuvB(12)-Holliday junction (HJ) complex. HJ DNA is sandwiched between 2 RuvA tetramers; dsDNA enters through RuvA and exits via RuvB. An RuvB hexamer assembles on each DNA strand where it exits the tetramer. Each RuvB hexamer is contacted by two RuvA subunits (via domain III) on 2 adjacent RuvB subunits; this complex drives branch migration. In the full resolvosome a probable DNA-RuvA(4)-RuvB(12)-RuvC(2) complex forms which resolves the HJ.

The protein localises to the cytoplasm. It catalyses the reaction ATP + H2O = ADP + phosphate + H(+). Its function is as follows. The RuvA-RuvB-RuvC complex processes Holliday junction (HJ) DNA during genetic recombination and DNA repair, while the RuvA-RuvB complex plays an important role in the rescue of blocked DNA replication forks via replication fork reversal (RFR). RuvA specifically binds to HJ cruciform DNA, conferring on it an open structure. The RuvB hexamer acts as an ATP-dependent pump, pulling dsDNA into and through the RuvAB complex. RuvB forms 2 homohexamers on either side of HJ DNA bound by 1 or 2 RuvA tetramers; 4 subunits per hexamer contact DNA at a time. Coordinated motions by a converter formed by DNA-disengaged RuvB subunits stimulates ATP hydrolysis and nucleotide exchange. Immobilization of the converter enables RuvB to convert the ATP-contained energy into a lever motion, pulling 2 nucleotides of DNA out of the RuvA tetramer per ATP hydrolyzed, thus driving DNA branch migration. The RuvB motors rotate together with the DNA substrate, which together with the progressing nucleotide cycle form the mechanistic basis for DNA recombination by continuous HJ branch migration. Branch migration allows RuvC to scan DNA until it finds its consensus sequence, where it cleaves and resolves cruciform DNA. The polypeptide is Holliday junction branch migration complex subunit RuvB (Frankia casuarinae (strain DSM 45818 / CECT 9043 / HFP020203 / CcI3)).